A 436-amino-acid chain; its full sequence is Nicotinate phosphoribosyltransferase (436 aa).

Phosphohistidine; by autocatalysis is present on H231.

The protein belongs to the NAPRTase family. Post-translationally, transiently phosphorylated on a His residue during the reaction cycle. Phosphorylation strongly increases the affinity for substrates and increases the rate of nicotinate D-ribonucleotide production. Dephosphorylation regenerates the low-affinity form of the enzyme, leading to product release.

The catalysed reaction is nicotinate + 5-phospho-alpha-D-ribose 1-diphosphate + ATP + H2O = nicotinate beta-D-ribonucleotide + ADP + phosphate + diphosphate. Its pathway is cofactor biosynthesis; NAD(+) biosynthesis; nicotinate D-ribonucleotide from nicotinate: step 1/1. Functionally, catalyzes the synthesis of beta-nicotinate D-ribonucleotide from nicotinate and 5-phospho-D-ribose 1-phosphate at the expense of ATP. This chain is Nicotinate phosphoribosyltransferase, found in Vibrio parahaemolyticus serotype O3:K6 (strain RIMD 2210633).